Reading from the N-terminus, the 313-residue chain is Olfactory receptor 4Q3 (313 aa).

The Extracellular portion of the chain corresponds to 1–25 (MKKEQDSNVTEFVLLGLSSSWELQL). Asn-8 is a glycosylation site (N-linked (GlcNAc...) asparagine). The chain crosses the membrane as a helical span at residues 26–49 (FLFLLFLFFYIAIVLGNLLIVVTV). Residues 50–58 (QAHAHLLQS) lie on the Cytoplasmic side of the membrane. A helical transmembrane segment spans residues 59–80 (PMYYFLGHLSFIDLCLSCVTVP). Over 81 to 101 (KMLGDFLQQGKSISFSGCLAQ) the chain is Extracellular. Cys-98 and Cys-190 are disulfide-bonded. A helical transmembrane segment spans residues 102 to 121 (IYFLHFLGASEMFLLTVMAY). At 122 to 140 (DRYVAICNPLRYLTVMNPQ) the chain is on the cytoplasmic side. Residues 141–159 (LCLWLVLACWCGGFIHSIM) traverse the membrane as a helical segment. The Extracellular segment spans residues 160-196 (QVILVIQLPFCGPNELDNFYCDVPQVIKLACMDTYVV). A helical transmembrane segment spans residues 197 to 220 (EVLVIANSGLLSLVCFLVLLFSYA). Over 221–236 (IILITLRTHFCQGQNK) the chain is Cytoplasmic. A helical transmembrane segment spans residues 237 to 259 (VFSTCASHLTVVSLIFVPCVFIY). At 260–270 (LRPFCSFSVDK) the chain is on the extracellular side. The chain crosses the membrane as a helical span at residues 271-290 (IFSLFYTVITPMLNPLIYTL). At 291-313 (RNTDMKTAMKKLRIKPCGIPLPC) the chain is on the cytoplasmic side.

It belongs to the G-protein coupled receptor 1 family.

Its subcellular location is the cell membrane. Its function is as follows. Odorant receptor. The protein is Olfactory receptor 4Q3 (OR4Q3) of Homo sapiens (Human).